Reading from the N-terminus, the 379-residue chain is MSATLALTEQLIARASVTPDDQHCQQLMIERLAALGFECETIASHGVTNFWAVKRGTAGRAGKLLAFAGHTDVVPTGPLEQWSSPPFVPTHRDGKLYGRGAADMKTSLAGFVVAAEEFVAAHPQHRGSIGFLITSDEEGPATDGTVKVVEALAARGERLDYCIVGEPTSTATLGDVVKNGRRGSMSGELVVKGVQGHIAYPHLAKNPIHLLAPALAELAAEQWDEGNEYFPPTTWQVSNLRAGTGATNVIPGHADLLFNFRFSTASTVEGLQARVHAILDRHGLDYTLNWSVSGLPFLTPRGELSNALDAAIRAETGVSPELSTTGGTSDGRFIARICPQVIEFGPPNASIHKIDEHIDVRFVDPLKNVYRRVLEQLIA.

Histidine 70 contacts Zn(2+). Aspartate 72 is an active-site residue. Residue aspartate 103 coordinates Zn(2+). The active-site Proton acceptor is the glutamate 137. Zn(2+) is bound by residues glutamate 138, glutamate 166, and histidine 352.

It belongs to the peptidase M20A family. DapE subfamily. As to quaternary structure, homodimer. Zn(2+) is required as a cofactor. It depends on Co(2+) as a cofactor.

It carries out the reaction N-succinyl-(2S,6S)-2,6-diaminopimelate + H2O = (2S,6S)-2,6-diaminopimelate + succinate. The protein operates within amino-acid biosynthesis; L-lysine biosynthesis via DAP pathway; LL-2,6-diaminopimelate from (S)-tetrahydrodipicolinate (succinylase route): step 3/3. Functionally, catalyzes the hydrolysis of N-succinyl-L,L-diaminopimelic acid (SDAP), forming succinate and LL-2,6-diaminopimelate (DAP), an intermediate involved in the bacterial biosynthesis of lysine and meso-diaminopimelic acid, an essential component of bacterial cell walls. The sequence is that of Succinyl-diaminopimelate desuccinylase from Burkholderia pseudomallei (strain 1106a).